The chain runs to 399 residues: CCA-adding enzyme (399 aa).

ATP-binding residues include glycine 32 and arginine 35. Residues glycine 32 and arginine 35 each coordinate CTP. 2 residues coordinate Mg(2+): aspartate 45 and aspartate 47. Residues arginine 116, aspartate 159, arginine 162, arginine 165, and arginine 168 each contribute to the ATP site. Positions 116, 159, 162, 165, and 168 each coordinate CTP.

It belongs to the tRNA nucleotidyltransferase/poly(A) polymerase family. Bacterial CCA-adding enzyme type 3 subfamily. Homodimer. It depends on Mg(2+) as a cofactor.

The enzyme catalyses a tRNA precursor + 2 CTP + ATP = a tRNA with a 3' CCA end + 3 diphosphate. The catalysed reaction is a tRNA with a 3' CCA end + 2 CTP + ATP = a tRNA with a 3' CCACCA end + 3 diphosphate. Functionally, catalyzes the addition and repair of the essential 3'-terminal CCA sequence in tRNAs without using a nucleic acid template. Adds these three nucleotides in the order of C, C, and A to the tRNA nucleotide-73, using CTP and ATP as substrates and producing inorganic pyrophosphate. tRNA 3'-terminal CCA addition is required both for tRNA processing and repair. Also involved in tRNA surveillance by mediating tandem CCA addition to generate a CCACCA at the 3' terminus of unstable tRNAs. While stable tRNAs receive only 3'-terminal CCA, unstable tRNAs are marked with CCACCA and rapidly degraded. The chain is CCA-adding enzyme from Streptococcus gordonii (strain Challis / ATCC 35105 / BCRC 15272 / CH1 / DL1 / V288).